The chain runs to 292 residues: Formamidopyrimidine-DNA glycosylase (292 aa).

Residue proline 2 is the Schiff-base intermediate with DNA of the active site. The Proton donor role is filled by glutamate 3. The active-site Proton donor; for beta-elimination activity is the lysine 61. DNA contacts are provided by histidine 96, arginine 115, and lysine 161. The FPG-type zinc-finger motif lies at 247 to 281 (SAYGQEDRPCPRCGTAIRREKFMNRSSFSCPKCQP). Catalysis depends on arginine 271, which acts as the Proton donor; for delta-elimination activity.

This sequence belongs to the FPG family. In terms of assembly, monomer. The cofactor is Zn(2+).

The enzyme catalyses Hydrolysis of DNA containing ring-opened 7-methylguanine residues, releasing 2,6-diamino-4-hydroxy-5-(N-methyl)formamidopyrimidine.. The catalysed reaction is 2'-deoxyribonucleotide-(2'-deoxyribose 5'-phosphate)-2'-deoxyribonucleotide-DNA = a 3'-end 2'-deoxyribonucleotide-(2,3-dehydro-2,3-deoxyribose 5'-phosphate)-DNA + a 5'-end 5'-phospho-2'-deoxyribonucleoside-DNA + H(+). Functionally, involved in base excision repair of DNA damaged by oxidation or by mutagenic agents. Acts as a DNA glycosylase that recognizes and removes damaged bases. Has a preference for oxidized purines, such as 7,8-dihydro-8-oxoguanine (8-oxoG). Has AP (apurinic/apyrimidinic) lyase activity and introduces nicks in the DNA strand. Cleaves the DNA backbone by beta-delta elimination to generate a single-strand break at the site of the removed base with both 3'- and 5'-phosphates. The protein is Formamidopyrimidine-DNA glycosylase of Rhodococcus jostii (strain RHA1).